Consider the following 366-residue polypeptide: tRNA/tmRNA (uracil-C(5))-methyltransferase (366 aa).

S-adenosyl-L-methionine contacts are provided by Gln-190, Tyr-218, Asn-223, Glu-239, and Asp-299. Cys-324 functions as the Nucleophile in the catalytic mechanism. Residue Glu-358 is the Proton acceptor of the active site.

This sequence belongs to the class I-like SAM-binding methyltransferase superfamily. RNA M5U methyltransferase family. TrmA subfamily.

It carries out the reaction uridine(54) in tRNA + S-adenosyl-L-methionine = 5-methyluridine(54) in tRNA + S-adenosyl-L-homocysteine + H(+). The enzyme catalyses uridine(341) in tmRNA + S-adenosyl-L-methionine = 5-methyluridine(341) in tmRNA + S-adenosyl-L-homocysteine + H(+). In terms of biological role, dual-specificity methyltransferase that catalyzes the formation of 5-methyluridine at position 54 (m5U54) in all tRNAs, and that of position 341 (m5U341) in tmRNA (transfer-mRNA). This chain is tRNA/tmRNA (uracil-C(5))-methyltransferase, found in Salmonella paratyphi B (strain ATCC BAA-1250 / SPB7).